A 338-amino-acid polypeptide reads, in one-letter code: MKRMIALDGAQGEGGGQILRSALSLSMITGLPFTITGIRAGRAKPGLLRQHLTAVKAAAEICRATVEGAELGSQRLLFRPGTVRGGDYRFAIGSAGSCTLVLQTVLPALWFADGPSRVEVSGGTDNPSAPPADFIRRVLEPLLAKIGIHQQTTLLRHGFYPAGGGVVATEVSPVTSFNTLQLGERGNIVRLRGEVLLAGVPRHVAEREIATLAASFSLHEQNIHNLPRDQGPGNTVSLEVESENITERFFVVGEKRVSAEVVAAQLVKEVKRYLASPAAVGEYLADQLVLPMALAGAGEFTVAHPSCHLLTNIAVVERFLPVRFGLVEADGVTRVSIE.

Residues glutamine 103 and 283–287 (YLADQ) contribute to the ATP site. The Tele-AMP-histidine intermediate role is filled by histidine 308.

It belongs to the RNA 3'-terminal cyclase family. Type 1 subfamily.

It localises to the cytoplasm. It carries out the reaction a 3'-end 3'-phospho-ribonucleotide-RNA + ATP = a 3'-end 2',3'-cyclophospho-ribonucleotide-RNA + AMP + diphosphate. In terms of biological role, catalyzes the conversion of 3'-phosphate to a 2',3'-cyclic phosphodiester at the end of RNA. The mechanism of action of the enzyme occurs in 3 steps: (A) adenylation of the enzyme by ATP; (B) transfer of adenylate to an RNA-N3'P to produce RNA-N3'PP5'A; (C) and attack of the adjacent 2'-hydroxyl on the 3'-phosphorus in the diester linkage to produce the cyclic end product. The biological role of this enzyme is unknown but it is likely to function in some aspects of cellular RNA processing. The polypeptide is RNA 3'-terminal phosphate cyclase (Escherichia coli O7:K1 (strain IAI39 / ExPEC)).